Reading from the N-terminus, the 503-residue chain is Glycoprotein 3-alpha-L-fucosyltransferase A (503 aa).

Topologically, residues 1 to 10 (MRRPKISLKK) are cytoplasmic. A helical; Signal-anchor for type II membrane protein transmembrane segment spans residues 11–28 (YFYLTLICALLLIFGFSL). The Lumenal portion of the chain corresponds to 29–503 (KEREIWKTLS…KDVISDSSDD (475 aa)). A disordered region spans residues 44–71 (ITTQQQQHQHLHQLQSMDEEHPMATSST). Positions 47–58 (QQQQHQHLHQLQ) are enriched in low complexity. 3 N-linked (GlcNAc...) asparagine glycosylation sites follow: N262, N295, and N299.

It belongs to the glycosyltransferase 10 family. Mn(2+) serves as cofactor.

The protein resides in the golgi apparatus. It is found in the golgi stack membrane. It catalyses the reaction N(4)-{beta-D-GlcNAc-(1-&gt;2)-alpha-D-Man-(1-&gt;3)-[beta-D-GlcNAc-(1-&gt;2)-alpha-D-Man-(1-&gt;6)]-beta-D-Man-(1-&gt;4)-beta-D-GlcNAc-(1-&gt;4)-beta-D-GlcNAc}-L-asparaginyl-[protein] + GDP-beta-L-fucose = N(4)-{beta-D-GlcNAc-(1-&gt;2)-alpha-D-Man-(1-&gt;3)-[beta-D-GlcNAc-(1-&gt;2)-alpha-D-Man-(1-&gt;6)]-beta-D-Man-(1-&gt;4)-beta-D-GlcNAc-(1-&gt;4)-[alpha-L-Fuc(1-&gt;3)]-beta-D-GlcNAc}-L-asparaginyl-[protein] + GDP + H(+). It functions in the pathway protein modification; protein glycosylation. Its function is as follows. Catalyzes alpha-1,3 glycosidic linkages of N-glycans. Plays a role in neuronal development by promoting ventral nerve cord formation, possibly by promoting interactions between migrating cells and the extracellular matrix or by promoting neural activity. This Drosophila melanogaster (Fruit fly) protein is Glycoprotein 3-alpha-L-fucosyltransferase A (FucTA).